Consider the following 194-residue polypeptide: SRP-independent targeting protein 3 homolog (194 aa).

2 helical membrane passes run 43–63 and 110–130; these read ILYA…KIII and LVTI…PPLL.

Belongs to the PHO88 family.

The protein resides in the endoplasmic reticulum membrane. In terms of biological role, may function in a SRP (signal recognition particle) and GET (guided entry of tail-anchored proteins) independent pathway for targeting a broad range of substrate proteins to the endoplasmic reticulum. Involved in inorganic phosphate uptake. Also involved in telomere length regulation and maintenance. The protein is SRP-independent targeting protein 3 homolog of Schizosaccharomyces pombe (strain 972 / ATCC 24843) (Fission yeast).